Reading from the N-terminus, the 311-residue chain is Prohibitin-2 (311 aa).

Residues 39 to 57 (GAGMGLAGLVLLGGAAFVA) form a helical membrane-spanning segment. Positions 141–144 (YRTL) match the AIM motif.

It belongs to the prohibitin family. In terms of assembly, the mitochondrial prohibitin complex consists of two subunits (PHB1 and PHB2). The subunits assemble into a membrane-associated ring-shaped supercomplex of approximately 1 mDa. Interacts with ATG24/SNX4; the interaction is direct and plays a role in mitophagy.

Its subcellular location is the mitochondrion inner membrane. In terms of biological role, prohibitin probably acts as a holdase/unfoldase for the stabilization of newly synthesized mitochondrial proteins. Involved in mitophagy. Required for the switch to necrotrophic growth. The sequence is that of Prohibitin-2 from Colletotrichum higginsianum (strain IMI 349063) (Crucifer anthracnose fungus).